The primary structure comprises 231 residues: L-ribulose-5-phosphate 4-epimerase AraD (231 aa).

Substrate-binding positions include G27–N28, S44–G45, and S74–S75. Zn(2+) contacts are provided by D76, H95, and H97. D120 functions as the Proton donor/acceptor in the catalytic mechanism. Zn(2+) is bound at residue H171. The active-site Proton donor/acceptor is Y229.

The protein belongs to the aldolase class II family. AraD/FucA subfamily. As to quaternary structure, homotetramer. Zn(2+) serves as cofactor.

The enzyme catalyses L-ribulose 5-phosphate = D-xylulose 5-phosphate. Its pathway is carbohydrate degradation; L-arabinose degradation via L-ribulose; D-xylulose 5-phosphate from L-arabinose (bacterial route): step 3/3. Its activity is regulated as follows. Inhibited by glycolohydroxamate at concentration above 0.1 mM. Involved in the degradation of L-arabinose. Catalyzes the interconversion of L-ribulose 5-phosphate (LRu5P) and D-xylulose 5-phosphate (D-Xu5P) via a retroaldol/aldol mechanism (carbon-carbon bond cleavage analogous to a class II aldolase reaction). The sequence is that of L-ribulose-5-phosphate 4-epimerase AraD from Escherichia coli (strain K12).